The sequence spans 286 residues: Alpha-ketoglutarate-dependent dioxygenase alkB homolog 3 (286 aa).

The tract at residues 1–46 (MEDKRQRARVQGGWATPTKSQSATQPASPARSRLSQTAGPAWRSKE) is disordered. Residues 17-38 (PTKSQSATQPASPARSRLSQTA) are compositionally biased toward polar residues. Substrate is bound by residues tryptophan 115 and 141 to 143 (YTY). The 107-residue stretch at 172–278 (TFNSLLCNFY…RVNLTFRTVY (107 aa)) folds into the Fe2OG dioxygenase domain. Leucine 177 is subject to (4R)-5-hydroxyleucine; alternate. The residue at position 177 (leucine 177) is a (4R)-5-oxoleucine; alternate. 179 to 181 (NFY) provides a ligand contact to 2-oxoglutarate. The Fe cation site is built by histidine 191 and aspartate 193. Position 194 (aspartate 194) interacts with substrate. Histidine 257 serves as a coordination point for Fe cation. Residues 269 to 275 (RVNLTFR) and arginine 275 each bind 2-oxoglutarate.

This sequence belongs to the alkB family. In terms of assembly, interacts with the ASCC complex composed of ASCC1, ASCC2 and ASCC3. Interacts directly with ASCC3, and is thereby recruited to the ASCC complex. Interacts with OTUD4; the interaction is direct. Interacts with USP7 and USP9X. The cofactor is Fe(2+). Ubiquitinated; undergoes 'Lys-48'-linked polyubiquitination. OTUD4 promotes USP7 and USP9X-dependent deubiquitination of 'Lys-48'-polyubiquitinated ALKBH3 promoting the repair of alkylated DNA lesions. As to expression, detected in testis, kidney, liver and heart.

It localises to the nucleus. It is found in the cytoplasm. It catalyses the reaction an N(1)-methyladenosine in mRNA + 2-oxoglutarate + O2 = an adenosine in mRNA + formaldehyde + succinate + CO2. It carries out the reaction a methylated nucleobase within DNA + 2-oxoglutarate + O2 = a nucleobase within DNA + formaldehyde + succinate + CO2. The enzyme catalyses an N(1)-methyl-2'-deoxyadenosine in single-stranded DNA + 2-oxoglutarate + O2 = a 2'-deoxyadenosine in single-stranded DNA + formaldehyde + succinate + CO2 + H(+). The catalysed reaction is an N(3)-methyl-2'-deoxycytidine in single-stranded DNA + 2-oxoglutarate + O2 = a 2'-deoxycytidine in single-stranded DNA + formaldehyde + succinate + CO2 + H(+). It catalyses the reaction a 3,N(4)-etheno-2'-deoxycytidine in single-stranded DNA + 2-oxoglutarate + O2 + H2O = a 2'-deoxycytidine in single-stranded DNA + glyoxal + succinate + CO2. Activated by ascorbate. Its function is as follows. Dioxygenase that mediates demethylation of DNA and RNA containing 1-methyladenosine (m1A). Repairs alkylated DNA containing 1-methyladenosine (m1A) and 3-methylcytosine (m3C) by oxidative demethylation. Has a strong preference for single-stranded DNA. Able to process alkylated m3C within double-stranded regions via its interaction with ASCC3, which promotes DNA unwinding to generate single-stranded substrate needed for ALKBH3. Can repair exocyclic 3,N4-ethenocytosine adducs in single-stranded DNA. Also acts on RNA. Demethylates N(1)-methyladenosine (m1A) RNA, an epigenetic internal modification of messenger RNAs (mRNAs) highly enriched within 5'-untranslated regions (UTRs) and in the vicinity of start codons. Requires molecular oxygen, alpha-ketoglutarate and iron. This Mus musculus (Mouse) protein is Alpha-ketoglutarate-dependent dioxygenase alkB homolog 3.